A 28-amino-acid chain; its full sequence is Palustrin-1a (28 aa).

The cysteines at positions 22 and 28 are disulfide-linked.

In terms of tissue distribution, expressed by the skin glands.

The protein resides in the secreted. In terms of biological role, antimicrobial activity against Gram-negative bacterium E.coli. This is Palustrin-1a from Lithobates palustris (Pickerel frog).